A 344-amino-acid chain; its full sequence is Transcription factor HRS1 (344 aa).

Positions isoleucine 88–arginine 184 are disordered. Residues asparagine 95–aspartate 104 show a composition bias toward acidic residues. Composition is skewed to basic and acidic residues over residues glutamate 105–tryptophan 124 and leucine 138–glycine 178. One can recognise an HTH myb-type domain in the interval glycine 178–arginine 238. A DNA-binding region (H-T-H motif) is located at residues proline 209 to arginine 234. The segment covering serine 269 to threonine 291 has biased composition (low complexity). The tract at residues serine 269 to glycine 322 is disordered.

In terms of tissue distribution, expressed in the root hair region and root hair cells.

It is found in the nucleus. Transcription factor involved in nitrate and phosphate signaling in roots. Integrates nitrate and phosphate starvation responses and adaptation of root architecture depending on nutrient availabilities. Acts downstream of the nitrate sensor and transporter NPF6.3/NRT1.1. Represses primary root development in response to phosphate deficiency conditions, only when nitrate is present. Involved in the modulation of primary root and root hair growth in phosphate-deprived environment. May be required for suppressing abscisic acid (ABA) signaling in germinating embryo axis, which promotes the timely germination of seeds. The polypeptide is Transcription factor HRS1 (Arabidopsis thaliana (Mouse-ear cress)).